The chain runs to 152 residues: Leptin (152 aa).

The N-terminal stretch at 1 to 26 is a signal peptide; that stretch reads MDHILALVLALLPLSLCVALPGALDA. C109 and C152 form a disulfide bridge.

This sequence belongs to the leptin family. In terms of tissue distribution, expressed mostly in the liver.

It is found in the secreted. In terms of biological role, may function as part of a signaling pathway that acts to regulate the size of the body fat depot. This Takifugu rubripes (Japanese pufferfish) protein is Leptin (lep).